The chain runs to 348 residues: Dihydroorotase (348 aa).

Zn(2+) contacts are provided by H17 and H19. Residues 19 to 21 and N45 each bind substrate; that span reads HLR. Zn(2+) contacts are provided by K103, H140, and H178. An N6-carboxylysine modification is found at K103. Position 140 (H140) interacts with substrate. L223 is a binding site for substrate. D251 serves as a coordination point for Zn(2+). Residue D251 is part of the active site. Residues H255 and A267 each coordinate substrate.

This sequence belongs to the metallo-dependent hydrolases superfamily. DHOase family. Class II DHOase subfamily. Homodimer. It depends on Zn(2+) as a cofactor.

It carries out the reaction (S)-dihydroorotate + H2O = N-carbamoyl-L-aspartate + H(+). The protein operates within pyrimidine metabolism; UMP biosynthesis via de novo pathway; (S)-dihydroorotate from bicarbonate: step 3/3. Functionally, catalyzes the reversible cyclization of carbamoyl aspartate to dihydroorotate. This chain is Dihydroorotase, found in Salmonella paratyphi C (strain RKS4594).